Reading from the N-terminus, the 81-residue chain is Photosystem I iron-sulfur center (81 aa).

4Fe-4S ferredoxin-type domains are found at residues 1-31 and 37-68; these read MSHT…MVPW and GQIA…IRVY. Cysteine 11, cysteine 14, cysteine 17, cysteine 21, cysteine 48, cysteine 51, cysteine 54, and cysteine 58 together coordinate [4Fe-4S] cluster.

The cyanobacterial PSI reaction center is composed of one copy each of PsaA,B,C,D,E,F,I,J,K,L,M and X, and forms trimeric complexes. It depends on [4Fe-4S] cluster as a cofactor.

It is found in the cellular thylakoid membrane. It carries out the reaction reduced [plastocyanin] + hnu + oxidized [2Fe-2S]-[ferredoxin] = oxidized [plastocyanin] + reduced [2Fe-2S]-[ferredoxin]. Functionally, apoprotein for the two 4Fe-4S centers FA and FB of photosystem I (PSI); essential for photochemical activity. FB is the terminal electron acceptor of PSI, donating electrons to ferredoxin. The C-terminus interacts with PsaA/B/D and helps assemble the protein into the PSI complex. Required for binding of PsaD and PsaE to PSI. PSI is a plastocyanin/cytochrome c6-ferredoxin oxidoreductase, converting photonic excitation into a charge separation, which transfers an electron from the donor P700 chlorophyll pair to the spectroscopically characterized acceptors A0, A1, FX, FA and FB in turn. This Acaryochloris marina (strain MBIC 11017) protein is Photosystem I iron-sulfur center.